We begin with the raw amino-acid sequence, 252 residues long: T-box transcription factor mls-1 (252 aa).

Residues 40–210 constitute a DNA-binding region (T-box); sequence LWRRFHNLGT…SNPFAKGFRE (171 aa).

May interact with unc-37.

The protein localises to the nucleus. In terms of biological role, probable transcription factor required for the cell fate specification of non-striated uterine muscle precursor cells. Furthermore, may function with the transcriptional corepressor unc-37. The protein is T-box transcription factor mls-1 of Caenorhabditis elegans.